The sequence spans 214 residues: MRDPVETYMNLVPMVVEQTNRGERAYDIFSRLLKERIIFLTGPVEDGMSTLVVAQLLFLEAENPKKEISMYINSPGGVVTSGLAIYDTMQFIRPPVSTLCTGQAASMGSLLLAAGHKDMRFSLPNARIMVHQPSGGFQGQATDIMLHAQEILNLKKRLNEIYVHHTGQTYKAIEDALERDKFLTAEMAREFGIVDKVIDKRAEETASASGPKAP.

The Nucleophile role is filled by S106. H131 is an active-site residue.

This sequence belongs to the peptidase S14 family. In terms of assembly, fourteen ClpP subunits assemble into 2 heptameric rings which stack back to back to give a disk-like structure with a central cavity, resembling the structure of eukaryotic proteasomes.

It is found in the cytoplasm. The catalysed reaction is Hydrolysis of proteins to small peptides in the presence of ATP and magnesium. alpha-casein is the usual test substrate. In the absence of ATP, only oligopeptides shorter than five residues are hydrolyzed (such as succinyl-Leu-Tyr-|-NHMec, and Leu-Tyr-Leu-|-Tyr-Trp, in which cleavage of the -Tyr-|-Leu- and -Tyr-|-Trp bonds also occurs).. Its function is as follows. Cleaves peptides in various proteins in a process that requires ATP hydrolysis. Has a chymotrypsin-like activity. Plays a major role in the degradation of misfolded proteins. This chain is ATP-dependent Clp protease proteolytic subunit, found in Rhodopseudomonas palustris (strain BisB5).